The following is a 696-amino-acid chain: MMTTATVLVELLTEELPPKALPRLGETFAAKVFEGLKARDLVAEDRGFRCFAAPRRLAVTVPTVRAAAPSREVTEKIMPVQVALDAEGRPTPALLKKLQAKGIAPEAVASFERRVDGKAEALFYTHLEPGAALDDVLAAIVQEAVKALPIPKLMRWGAGDAQFVRPVHKLAMLHGARVVPGRVLDLDAGRVTMGHRFMSRGEIELATAEAYEPTLLAEGKVIPDFAERRSNIERQLVATAQEQGASLGEYADLLDEVAALVEHPTVYVGEFELEFLAVPQECLILTMRANQKYFPLFDAAGKLLNRFLIVSNMRLADPSNIVAGNQRVVRPRLSDARFFFEQDRKHTLDSRLPRLAPVVYHNKLGSQLERVERLERLAGRIADRLHGDVAAASRAARLAKADLVTDMVGEFPELQGIMGRYYALNDGEGEVVADAVQSHYQPRFAGDTLPAGNTACAVALADKLDTLVGFFGIGQLPTGDKDPFGLRRAALGVLRILIETPLPLDLAALVGDAAEGFAPGLLTAADFESQLLDFMFERLRNLLREAGHAVDVVDAVLALHPTRIDLVPAKLDAVRVFRGLPEAEALAAANKRIVNILKKAEDELPEPDVALLQEQAEKALFHAVVEVAPLVHSHVANEDYTDALCALAGLRAAVDTFFDDVMVMVEEPLTRRNRLALLRQLAGLMNQVADLSRLSA.

It belongs to the class-II aminoacyl-tRNA synthetase family. As to quaternary structure, tetramer of two alpha and two beta subunits.

Its subcellular location is the cytoplasm. The catalysed reaction is tRNA(Gly) + glycine + ATP = glycyl-tRNA(Gly) + AMP + diphosphate. The chain is Glycine--tRNA ligase beta subunit from Aromatoleum aromaticum (strain DSM 19018 / LMG 30748 / EbN1) (Azoarcus sp. (strain EbN1)).